Reading from the N-terminus, the 272-residue chain is Isoprenyl transferase (272 aa).

Residue D32 is part of the active site. D32 is a binding site for Mg(2+). Substrate is bound by residues 33–36 (GNGR), W37, R45, H49, and 77–79 (STE). N80 serves as the catalytic Proton acceptor. Residues W81, R83, R200, and 206 to 208 (RIS) contribute to the substrate site. Position 219 (E219) interacts with Mg(2+).

Belongs to the UPP synthase family. As to quaternary structure, homodimer. Requires Mg(2+) as cofactor.

In terms of biological role, catalyzes the condensation of isopentenyl diphosphate (IPP) with allylic pyrophosphates generating different type of terpenoids. This Prochlorococcus marinus subsp. pastoris (strain CCMP1986 / NIES-2087 / MED4) protein is Isoprenyl transferase.